Here is a 695-residue protein sequence, read N- to C-terminus: MAFETFSVALDKDKTLIFETGKIARQASGAVLVKMNETWVFSSACAASLSEAVGFLPFRVDYQEKFSSAGRTSGGFLKREGRPSEREILVSRLIDRSLRPSFPNRLMQDIQVLSYVWSYDGKTLPDPLAICGASAALAISEVPQNCIIAGVRVGLVGGKWVINPTRDELSASKLDLVMAGTASAVLMIEGHCDFLTEEQVLEAIAFGQTYIAKICDAIEAWQKAIGKQKNFSAVLDMPEDVQNVVSDFIREKFEKALSFRDKEALEQASKELEESVIANLVQEENSDFSLLNVKAAFKTAKSNQMRALIQDLGIRVDGRTTTEIRPISIETPLLPRTHGSCLFTRGETQSMAVCTLGGENMAQRFEDLNGDGAARFYLQYFFPPFSVGEVGRIGSPGRREIGHGKLAEKALSHVLPETSRFPYIIRLESNITESNGSSSMASVCGGCLALMDAGVPIKAPVAGIAMGLILDRDQAIILSDISGIEDHLGDMDFKVAGTAKGITAFQMDIKIEGITHKIMEQALAQAKQGRSHILNLMTQVLASPKGTVSKYAPRIETMQINTSKIATVIGPGGKQIRQIIERSGAQVDINDDGVINIAASTQESINKAKELIEGLTGEVEVGKVYNGRVTSIATFGVFVEVLPGKEGLCHISELSKQKVDNISDFVKEGDKLAVKLLSINEKGQLKLSHKATLED.

The Mg(2+) site is built by Asp-486 and Asp-492. The 60-residue stretch at 553-612 (PRIETMQINTSKIATVIGPGGKQIRQIIERSGAQVDINDDGVINIAASTQESINKAKELI) folds into the KH domain. The S1 motif domain maps to 622 to 690 (GKVYNGRVTS…EKGQLKLSHK (69 aa)).

It belongs to the polyribonucleotide nucleotidyltransferase family. Mg(2+) is required as a cofactor.

Its subcellular location is the cytoplasm. The catalysed reaction is RNA(n+1) + phosphate = RNA(n) + a ribonucleoside 5'-diphosphate. Involved in mRNA degradation. Catalyzes the phosphorolysis of single-stranded polyribonucleotides processively in the 3'- to 5'-direction. The polypeptide is Polyribonucleotide nucleotidyltransferase (Chlamydia trachomatis serovar L2 (strain ATCC VR-902B / DSM 19102 / 434/Bu)).